The chain runs to 545 residues: Cytochrome P450 monooxygenase 212 (545 aa).

The signal sequence occupies residues 1-14; sequence MAAYAWLYCALALG. Cys-486 provides a ligand contact to heme.

The protein belongs to the cytochrome P450 family. The cofactor is heme.

The protein operates within secondary metabolite biosynthesis. Functionally, cytochrome P450 monooxygenase that is able to use anthracene and pyrene as substrates for oxidation. In Postia placenta (strain ATCC 44394 / Madison 698-R) (Brown rot fungus), this protein is Cytochrome P450 monooxygenase 212.